We begin with the raw amino-acid sequence, 330 residues long: Putative ADP-ribosyl glycohydrolase L543 (330 aa).

This sequence belongs to the ADP-ribosylglycohydrolase family.

The sequence is that of Putative ADP-ribosyl glycohydrolase L543 from Acanthamoeba polyphaga mimivirus (APMV).